Reading from the N-terminus, the 475-residue chain is Ankyrin repeat, SAM and basic leucine zipper domain-containing protein 1 (475 aa).

The disordered stretch occupies residues 1–25 (MAAGALRGLPVAGGGESSESEDDGW). Phosphoserine occurs at positions 17, 18, and 20. 6 ANK repeats span residues 45–74 (EKKEKFKKAMTIGDVSLVQELLDSGISVDS), 78–107 (YGWTPLMYAASVANAELVRVLLDRGANASF), 110–144 (DKQSILITACSAHGSEELILKCVELLLSRNADPNV), 148–177 (RLMTPIMYAARDGHTQVVALLVAHGAEVNT), 181–210 (NGYTALTWAARQGHKNIVLKLLELGANKML), and 214–243 (DGKMPSEIAKRNKHHEIFNLLSFTLNPLEG). Positions 272-334 (SYTAFGDLEV…KILAALKELQ (63 aa)) constitute an SAM domain.

Interacts with DDX4, PIWIL1, RANBP9 and TDRD1.

It is found in the cytoplasm. Functionally, plays a central role during spermatogenesis by repressing transposable elements and preventing their mobilization, which is essential for the germline integrity. Acts via the piRNA metabolic process, which mediates the repression of transposable elements during meiosis by forming complexes composed of piRNAs and Piwi proteins and governs the methylation and subsequent repression of transposons. Its association with pi-bodies suggests a participation in the primary piRNAs metabolic process. Required prior to the pachytene stage to facilitate the production of multiple types of piRNAs, including those associated with repeats involved in the regulation of retrotransposons. May act by mediating protein-protein interactions during germ cell maturation. In Nomascus leucogenys (Northern white-cheeked gibbon), this protein is Ankyrin repeat, SAM and basic leucine zipper domain-containing protein 1 (ASZ1).